The sequence spans 218 residues: N-(5'-phosphoribosyl)anthranilate isomerase (218 aa).

This sequence belongs to the TrpF family.

The enzyme catalyses N-(5-phospho-beta-D-ribosyl)anthranilate = 1-(2-carboxyphenylamino)-1-deoxy-D-ribulose 5-phosphate. Its pathway is amino-acid biosynthesis; L-tryptophan biosynthesis; L-tryptophan from chorismate: step 3/5. This is N-(5'-phosphoribosyl)anthranilate isomerase from Rhodopseudomonas palustris (strain HaA2).